A 144-amino-acid polypeptide reads, in one-letter code: Large ribosomal subunit protein uL13 (144 aa).

This sequence belongs to the universal ribosomal protein uL13 family. In terms of assembly, part of the 50S ribosomal subunit.

Its function is as follows. This protein is one of the early assembly proteins of the 50S ribosomal subunit, although it is not seen to bind rRNA by itself. It is important during the early stages of 50S assembly. The polypeptide is Large ribosomal subunit protein uL13 (Buchnera aphidicola subsp. Baizongia pistaciae (strain Bp)).